Reading from the N-terminus, the 232-residue chain is Ubiquinone biosynthesis O-methyltransferase (232 aa).

S-adenosyl-L-methionine contacts are provided by Arg-36, Gly-55, Asp-76, and Leu-120.

This sequence belongs to the methyltransferase superfamily. UbiG/COQ3 family.

The enzyme catalyses a 3-demethylubiquinol + S-adenosyl-L-methionine = a ubiquinol + S-adenosyl-L-homocysteine + H(+). It catalyses the reaction a 3-(all-trans-polyprenyl)benzene-1,2-diol + S-adenosyl-L-methionine = a 2-methoxy-6-(all-trans-polyprenyl)phenol + S-adenosyl-L-homocysteine + H(+). It participates in cofactor biosynthesis; ubiquinone biosynthesis. O-methyltransferase that catalyzes the 2 O-methylation steps in the ubiquinone biosynthetic pathway. The sequence is that of Ubiquinone biosynthesis O-methyltransferase from Pseudomonas aeruginosa (strain ATCC 15692 / DSM 22644 / CIP 104116 / JCM 14847 / LMG 12228 / 1C / PRS 101 / PAO1).